The chain runs to 197 residues: MIGRLRGIVAYKAPPWLVVDVNGVGYELEAPMSTFYDLPELGREVTLYTHYSQKEDSVSLYGFLREGERRLFRDVQKVSGIGAKIALAVLSGVTVEEFARMVQAGDITALTRIPGIGKKTAERMVLELRDRAAQFGAGGALPTGSGPAPADPLSDATVALQQLGYKPAEAARMAREAFNEGDEVAIVIRKALQSALR.

Positions 1–64 are domain I; sequence MIGRLRGIVA…EDSVSLYGFL (64 aa). A domain II region spans residues 65 to 143; that stretch reads REGERRLFRD…QFGAGGALPT (79 aa). Positions 144 to 153 are flexible linker; that stretch reads GSGPAPADPL. Residues 153 to 197 are domain III; sequence LSDATVALQQLGYKPAEAARMAREAFNEGDEVAIVIRKALQSALR.

Belongs to the RuvA family. In terms of assembly, homotetramer. Forms an RuvA(8)-RuvB(12)-Holliday junction (HJ) complex. HJ DNA is sandwiched between 2 RuvA tetramers; dsDNA enters through RuvA and exits via RuvB. An RuvB hexamer assembles on each DNA strand where it exits the tetramer. Each RuvB hexamer is contacted by two RuvA subunits (via domain III) on 2 adjacent RuvB subunits; this complex drives branch migration. In the full resolvosome a probable DNA-RuvA(4)-RuvB(12)-RuvC(2) complex forms which resolves the HJ.

The protein localises to the cytoplasm. Its function is as follows. The RuvA-RuvB-RuvC complex processes Holliday junction (HJ) DNA during genetic recombination and DNA repair, while the RuvA-RuvB complex plays an important role in the rescue of blocked DNA replication forks via replication fork reversal (RFR). RuvA specifically binds to HJ cruciform DNA, conferring on it an open structure. The RuvB hexamer acts as an ATP-dependent pump, pulling dsDNA into and through the RuvAB complex. HJ branch migration allows RuvC to scan DNA until it finds its consensus sequence, where it cleaves and resolves the cruciform DNA. In Stenotrophomonas maltophilia (strain R551-3), this protein is Holliday junction branch migration complex subunit RuvA.